The primary structure comprises 323 residues: Calcium homeostasis modulator protein 2 (323 aa).

Topologically, residues Met-1–Val-21 are cytoplasmic. The central pore stretch occupies residues Leu-14–Phe-39. Residues Met-22–Ala-43 form a helical membrane-spanning segment. Residues Phe-44–Arg-52 lie on the Extracellular side of the membrane. 2 cysteine pairs are disulfide-bonded: Cys-46–Cys-130 and Cys-48–Cys-162. The helical transmembrane segment at Asn-53–Asn-76 threads the bilayer. The Cytoplasmic segment spans residues Asn-77–Leu-101. A helical membrane pass occupies residues Leu-102 to Leu-132. Over Ser-133–Arg-179 the chain is Extracellular. Positions Glu-145–His-152 are hemichannel docking. The chain crosses the membrane as a helical span at residues Leu-180–Lys-206. Topologically, residues His-207–Ser-323 are cytoplasmic. An intersubunit interaction region spans residues Tyr-214–Phe-251.

Belongs to the CALHM family. As to quaternary structure, homo-undecamer. Two undecameric hemichannels can assemble in a head-to-head manner to form a gap junction.

The protein resides in the cell membrane. The enzyme catalyses ATP(in) = ATP(out). Its function is as follows. Pore-forming subunit of Ca(2+) homeostasis modulator channels. Mediates ATP release from astrocytes and ATP-induced Ca(2+) influx in microglia thus regulating neuronal ATP and Ca(2+) homeostasis, synaptic transmission and neuroinflammatory response. May form intercellular gap junctions. The gating mechanism remains unknown. The protein is Calcium homeostasis modulator protein 2 (CALHM2) of Bos taurus (Bovine).